The sequence spans 163 residues: uncharacterized protein (163 aa).

Residues 1–10 show a composition bias toward basic and acidic residues; that stretch reads MGVPRAREGR. The tract at residues 1-163 is disordered; the sequence is MGVPRAREGR…WSFTPLRWGS (163 aa).

This is an uncharacterized protein from Homo sapiens (Human).